The sequence spans 770 residues: Protein argonaute (770 aa).

The segment at 1–151 (MKAKVVINLV…VIHIIHQIQS (151 aa)) is N-terminal domain. The PAZ domain occupies 154-272 (TLWELVNKDP…LLPQLVVPTY (119 aa)). The interval 276–361 (QLESDVAKEI…SQLLLWTNYS (86 aa)) is interdomain connector. Positions 362-544 (RKYPVILPYE…LSKLGVKYYV (183 aa)) are mid domain. A Piwi domain is found at 473-756 (GLAFIAARNK…FANAIRNEWK (284 aa)). Residues aspartate 558, glutamate 596, aspartate 628, and histidine 745 contribute to the active site. Residue aspartate 558 participates in Mn(2+) binding. Residues aspartate 628, histidine 745, and valine 770 each coordinate Mn(2+).

Belongs to the argonaute family. Long pAgo subfamily. In terms of assembly, monomer. The cofactor is Mn(2+).

Inhibited at greater than 500 mM NaCl. A DNA-guided ssDNA endonuclease that may play a role in defense against invading mobile genetic elements. Uses short 5'-phospho-ssDNA sequences as guides (gDNA) to bind complementary target strands, resulting in cleavage of the target DNA (tDNA). Endonucleolytically cleaves DNA in short dsDNA (the gDNA indicates where to cleave on the tDNA). Efficient guide-dependent target DNA cleavage requires a minimal gDNA length of 15 nucleotides (nt) and works up to at least 31 nt. Overexpression decreases plasmid transformation efficiency. Has no appreciable activity with gRNA or on target RNA. Also has guide-independent activity on plasmid DNA called 'chopping'. The cleavage site is 10 nucleotides (nt) downstream of the target residue base-paired with the 5'-end of the gDNA, cleavage is insensitive to adenine methylation. DNA cleavage produces 5'-phosphomonoesters (as it can be ligated by T4 DNA ligase). The polypeptide is Protein argonaute (Pyrococcus furiosus (strain ATCC 43587 / DSM 3638 / JCM 8422 / Vc1)).